We begin with the raw amino-acid sequence, 124 residues long: Aspartate 1-decarboxylase (124 aa).

Ser-25 (schiff-base intermediate with substrate; via pyruvic acid) is an active-site residue. The residue at position 25 (Ser-25) is a Pyruvic acid (Ser). Residue Thr-57 participates in substrate binding. Tyr-58 functions as the Proton donor in the catalytic mechanism. Residue 73–75 (GAA) coordinates substrate.

The protein belongs to the PanD family. In terms of assembly, heterooctamer of four alpha and four beta subunits. It depends on pyruvate as a cofactor. In terms of processing, is synthesized initially as an inactive proenzyme, which is activated by self-cleavage at a specific serine bond to produce a beta-subunit with a hydroxyl group at its C-terminus and an alpha-subunit with a pyruvoyl group at its N-terminus.

It is found in the cytoplasm. It carries out the reaction L-aspartate + H(+) = beta-alanine + CO2. Its pathway is cofactor biosynthesis; (R)-pantothenate biosynthesis; beta-alanine from L-aspartate: step 1/1. Functionally, catalyzes the pyruvoyl-dependent decarboxylation of aspartate to produce beta-alanine. The polypeptide is Aspartate 1-decarboxylase (Clostridium botulinum (strain Alaska E43 / Type E3)).